The following is a 184-amino-acid chain: Photosystem I assembly protein Ycf4 (184 aa).

A run of 2 helical transmembrane segments spans residues F22 to S42 and I57 to S77.

This sequence belongs to the Ycf4 family.

It is found in the plastid. The protein resides in the chloroplast thylakoid membrane. Its function is as follows. Seems to be required for the assembly of the photosystem I complex. The polypeptide is Photosystem I assembly protein Ycf4 (Ceratophyllum demersum (Rigid hornwort)).